The sequence spans 213 residues: ATP synthase peripheral stalk subunit OSCP, mitochondrial (213 aa).

The transit peptide at 1 to 23 directs the protein to the mitochondrion; that stretch reads MAAPAASGLSRQVRSFSTSVVRP. The short motif at 5–23 is the SIFI-degron element; it reads AASGLSRQVRSFSTSVVRP. Lys-54, Lys-60, Lys-70, and Lys-73 each carry N6-acetyllysine. Lys-90 bears the N6-succinyllysine mark. N6-acetyllysine; alternate is present on residues Lys-100, Lys-158, and Lys-162. 3 positions are modified to N6-succinyllysine; alternate: Lys-100, Lys-158, and Lys-162. 3 positions are modified to N6-acetyllysine: Lys-172, Lys-176, and Lys-192. Lys-199 carries the N6-succinyllysine modification.

Belongs to the ATPase delta chain family. As to quaternary structure, component of the ATP synthase complex composed at least of ATP5F1A/subunit alpha, ATP5F1B/subunit beta, ATP5MC1/subunit c (homooctomer), MT-ATP6/subunit a, MT-ATP8/subunit 8, ATP5ME/subunit e, ATP5MF/subunit f, ATP5MG/subunit g, ATP5MK/subunit k, ATP5MJ/subunit j, ATP5F1C/subunit gamma, ATP5F1D/subunit delta, ATP5F1E/subunit epsilon, ATP5PF/subunit F6, ATP5PB/subunit b, ATP5PD/subunit d, ATP5PO/subunit OSCP. ATP synthase complex consists of a soluble F(1) head domain (subunits alpha(3) and beta(3)) - the catalytic core - and a membrane F(0) domain - the membrane proton channel (subunits c, a, 8, e, f, g, k and j). These two domains are linked by a central stalk (subunits gamma, delta, and epsilon) rotating inside the F1 region and a stationary peripheral stalk (subunits F6, b, d, and OSCP). In terms of processing, acetylation of Lys-70 and Lys-158 is observed in liver mitochondria from fasted mice but not from fed mice. Acetylation at Lys-162 decreases ATP production. Deacetylated by SIRT3. Post-translationally, in response to mitochondrial stress, the precursor protein is ubiquitinated by the SIFI complex in the cytoplasm before mitochondrial import, leading to its degradation. Within the SIFI complex, UBR4 initiates ubiquitin chain that are further elongated or branched by KCMF1.

It is found in the mitochondrion. It localises to the mitochondrion inner membrane. Subunit OSCP, of the mitochondrial membrane ATP synthase complex (F(1)F(0) ATP synthase or Complex V) that produces ATP from ADP in the presence of a proton gradient across the membrane which is generated by electron transport complexes of the respiratory chain. ATP synthase complex consist of a soluble F(1) head domain - the catalytic core - and a membrane F(1) domain - the membrane proton channel. These two domains are linked by a central stalk rotating inside the F(1) region and a stationary peripheral stalk. During catalysis, ATP synthesis in the catalytic domain of F(1) is coupled via a rotary mechanism of the central stalk subunits to proton translocation. In vivo, can only synthesize ATP although its ATP hydrolase activity can be activated artificially in vitro. Part of the complex F(0) domain. Part of the complex F(0) domain and the peripheric stalk, which acts as a stator to hold the catalytic alpha(3)beta(3) subcomplex and subunit a/ATP6 static relative to the rotary elements. The chain is ATP synthase peripheral stalk subunit OSCP, mitochondrial from Mus musculus (Mouse).